A 182-amino-acid polypeptide reads, in one-letter code: Dipetalodipin (182 aa).

Positions 1–18 are cleaved as a signal peptide; the sequence is MKTIIAAIFLGILMHAFA. 3 disulfide bridges follow: cysteine 21-cysteine 134, cysteine 55-cysteine 181, and cysteine 87-cysteine 103.

This sequence belongs to the calycin superfamily. Triabin family. As to expression, expressed in salivary glands.

It is found in the secreted. Inhibits platelet aggregation, vasoconstriction, and angiogenesis through binding to distinct eicosanoids involved in inflammation (acts as a scavenger), and has a role in inhibiting host innate immunity by impairing platelet-assisted formation of neutrophil extracellular traps (NETs). Inhibits platelet aggregation by collagen (IC(50)=30 nM), thromboxane A2 mimetic (TXA2 mimetic), or arachidonic acid (AA) without affecting aggregation induced by ADP, convulxin (GP6 agonist), PMA, and ristocetin (vWF-dependent platelet agglutinator). Binds with high affinity to TXA2, TXB2, prostaglandine H2 mimetic (PGH2 mimetic), PGD2, PGJ2, and PGF2alpha. Also interacts with 15(S)-hydroxyeicosatetraenoic acid (HETE), being the first calycin/lipocalin described to date to bind to a derivative of 15-lipoxygenase. Binding is not observed to other prostaglandins, leukotrienes, HETEs, lipids, and biogenic amines. It prevents contraction of rat uterus stimulated by PGF2alpha and induces relaxation of aorta previously contracted with TXA2 mimetic. In addition, it inhibits angiogenesis mediated by 15(S)-HETE and does not enhance inhibition of collagen-induced platelet aggregation by SQ29548 (TXA2 antagonist) and indomethacin. Also impairs platelet-assisted formation of neutrophil extracellular traps (NETs). NETs are web-like structures of DNA and proteins that play an important role in killing of pathogens. In addition, NETs are implicated in thrombus formation. In vivo, this protein exhibits antithrombotic activity in two distinct mice models that are highly dependent on platelets. It is noteworthy that it inhibits thrombosis without promoting excessive bleeding. In Dipetalogaster maximus (Blood-sucking bug), this protein is Dipetalodipin.